A 316-amino-acid polypeptide reads, in one-letter code: MKILVTGAAGFIGSHLCEELLKDKKHNVIGIDDFIGPTPFSLKLKNLKNLLPEKRFTFIKENLLTADLASLLEGVDVIFHLAAIPGVRSSWGNHFHPYAAHNIQALQRLLEACREHSIQTFVFASTSSVYGEKQGKVSENTSLSPLSPYGVTKLTGEKLCHVYKQSFGIPIVILRFFTVYGPRQRPDMAFHRLIKQHLQQKPLTIFGDGQQSRDFTYISDCVKGITAVLGKPHLIGETVNIGGAERASVLKVVSLIEDISGRKATLHFSDKIAGEPSNTWADISKAKQLLHYDPATSLKDGLTNEIAYLSSLYQGE.

Substrate is bound at residue threonine 126. Tyrosine 149 acts as the Proton acceptor in catalysis.

This sequence belongs to the NAD(P)-dependent epimerase/dehydratase family.

This is an uncharacterized protein from Bacillus subtilis (strain 168).